The chain runs to 492 residues: RNA helicase CrhR (492 aa).

The Q motif motif lies at S7–T35. In terms of domain architecture, Helicase ATP-binding spans I38–V207. S51–T58 is a binding site for ATP. A DEAD box motif is present at residues D155–D158. The Helicase C-terminal domain maps to K234–V379. Residues V451 to Q492 form a disordered region. A compositionally biased stretch (gly residues) spans N457 to G471.

The protein belongs to the DEAD box helicase family.

It localises to the cytoplasm. The protein localises to the cell inner membrane. It is found in the cellular thylakoid membrane. The catalysed reaction is ATP + H2O = ADP + phosphate + H(+). Its activity is regulated as follows. Helicase inhibited by the slowly-hydrolyzing ATP analog ATP-gamma-S. Protein is rapidly degraded upon shifting from 20 to 30 degrees Celsius, the degradation machinery is only transiently present in cells grown at 30 degrees Celsius, is inhibited by commercial protease inhibitors and requires full-length protein expression (the N-terminal fragment does not induce proteolysis although it can be degraded by wild-type extract). In terms of biological role, an ATP-dependent bidirectional RNA helicase with RNA-dependent ATPase activity; does not unwind dsDNA, uses only (d)ATP. Also has ATP-dependent RNA annealing activity; concurrent annealing and helicase activity promote strand-exchange activity. In vitro has low helicase processivity, annealing processivity is probably higher. Required for correct cold adaptation, probably by aiding translation of mRNAs required for photosynthesis and electron transport. Probably regulates the cold-shock-inducible expression of the GroESL chaperones. May partially regulate its own expression at both the transcriptional and post-transcriptional level (experiments used a construct expressing a 25 kDa trunacted protein which might have dominant-negative effects); is probably not directly involved in the pathway responsible for mRNA degradation. The protein is RNA helicase CrhR of Synechocystis sp. (strain ATCC 27184 / PCC 6803 / Kazusa).